Consider the following 586-residue polypeptide: MAPPAPLLAVRGSEGLFMVNGPPSFTESAVFQRDSGRNCKAVAFSKDGSLFAWCNGEKVNIVNVTSAGLLRSFDLPKVVCLEFSPKNNILATWQAYSAAKDGTAGAPNLQLYDVKTGKCLKSFIQKKMQNWCPCWADDESICARNVNNEVHFFENNNFNTIANKLHLQKVNDFVLSPGAQPTKVAVYVPGSKGAPSFVRLYQYPNFGGPQSALANKSFFKADKVTMLWNKKATAVLVIASTDVDKTGASYYGEQTLHYIATNGESAIVQLPKNGPIYDVVWNPNSVEFCAVYGFMPAKATVFNLKCDPVFDFGTGPRNAAYYSPHGHILVLAGFGNLRGQMEVWDVKNYKLISKPVASDSTYFAWCPDGEHIVTATCAPRLRVSNGYKIWHYTGSVLHNYEVPSNEEMWQVSWQPFLDGVFPVKAVKYQAVPSELPSAEPKPAQAYRPPALRNKPVTSSKLHEDEPPQNMKPQSGSSEKPLSKTALKNQKKHEPKKAAKQEAKADCSQESTQSSASQNTPRSAVPVVTSGDPEIDKKIKNLKKKLKAIEQLKEQAAAGKQLEKNQLEKIQKESALLQELEDLELGL.

WD repeat units lie at residues Pro-23–Asn-63, Gln-125–Asn-163, and Val-356–Glu-401. A disordered region spans residues Glu-434–Asp-531. Polar residues predominate over residues Met-470–Lys-479. The span at Lys-495–Cys-506 shows a compositional bias: basic and acidic residues. Residues Ser-507–Arg-521 show a composition bias toward polar residues. Positions Pro-532–Glu-583 form a coiled coil.

This sequence belongs to the WD repeat EIF2A family.

Functions in the early steps of protein synthesis of a small number of specific mRNAs. Acts by directing the binding of methionyl-tRNAi to 40S ribosomal subunits. In contrast to the eIF-2 complex, it binds methionyl-tRNAi to 40S subunits in a codon-dependent manner, whereas the eIF-2 complex binds methionyl-tRNAi to 40S subunits in a GTP-dependent manner. This Gallus gallus (Chicken) protein is Eukaryotic translation initiation factor 2A (EIF2A).